The primary structure comprises 188 residues: Protein GrpE 2 (188 aa).

Residues 1–29 are compositionally biased toward basic and acidic residues; sequence MDNQEKKTNYQNTDKENDLEKNKEKKNDE. The disordered stretch occupies residues 1–33; it reads MDNQEKKTNYQNTDKENDLEKNKEKKNDESIFQ.

This sequence belongs to the GrpE family. Homodimer.

The protein localises to the cytoplasm. Participates actively in the response to hyperosmotic and heat shock by preventing the aggregation of stress-denatured proteins, in association with DnaK and GrpE. It is the nucleotide exchange factor for DnaK and may function as a thermosensor. Unfolded proteins bind initially to DnaJ; upon interaction with the DnaJ-bound protein, DnaK hydrolyzes its bound ATP, resulting in the formation of a stable complex. GrpE releases ADP from DnaK; ATP binding to DnaK triggers the release of the substrate protein, thus completing the reaction cycle. Several rounds of ATP-dependent interactions between DnaJ, DnaK and GrpE are required for fully efficient folding. This Buchnera aphidicola subsp. Schizaphis graminum (strain Sg) protein is Protein GrpE 2.